We begin with the raw amino-acid sequence, 242 residues long: Polycomb group RING finger protein 3 (242 aa).

The RING-type zinc-finger motif lies at 17-56; the sequence is CRLCNGYLIDATTVTECLHTFCRSCLVKYLEENNTCPTCR. Residues 120–149 are disordered; the sequence is EAHRNGETKTDEHTHKEPPEEKQEEDHDYH.

In terms of assembly, component of a PRC1-like complex.

Its subcellular location is the nucleus. Functionally, component of a Polycomb group (PcG) multiprotein PRC1-like complex, a complex class required to maintain the transcriptionally repressive state of many genes, including Hox genes, throughout development. PcG PRC1 complex acts via chromatin remodeling and modification of histones; it mediates monoubiquitination of histone H2A 'Lys-119', rendering chromatin heritably changed in its expressibility. Within the PRC1-like complex, regulates RNF2 ubiquitin ligase activity. The sequence is that of Polycomb group RING finger protein 3 (pcgf3) from Xenopus tropicalis (Western clawed frog).